We begin with the raw amino-acid sequence, 459 residues long: Elongation factor 1-alpha (459 aa).

Gly-2 carries the n,N,N-trimethylglycine modification. Lys-3 is modified (N6,N6-dimethyllysine; alternate). Lys-3 bears the N6-methyllysine; alternate mark. Positions 5–239 (KSHINVVVIG…DAIDPPSRPT (235 aa)) constitute a tr-type G domain. A G1 region spans residues 14 to 21 (GHVDSGKS). 14–21 (GHVDSGKS) contributes to the GTP binding site. Lys-30 is modified (N6-methyllysine). Residues 70–74 (GITID) form a G2 region. Position 79 is an N6,N6,N6-trimethyllysine (Lys-79). Residues 91-94 (DAPG) form a G3 region. Residues 91–95 (DAPGH) and 153–156 (NKMD) each bind GTP. Positions 153 to 156 (NKMD) are G4. The segment at 192–194 (SGF) is G5. An N6,N6-dimethyllysine; alternate modification is found at Lys-315. Position 315 is an N6-methyllysine; alternate (Lys-315). Lys-389 is subject to N6-methyllysine.

This sequence belongs to the TRAFAC class translation factor GTPase superfamily. Classic translation factor GTPase family. EF-Tu/EF-1A subfamily.

It localises to the cytoplasm. Functionally, this protein promotes the GTP-dependent binding of aminoacyl-tRNA to the A-site of ribosomes during protein biosynthesis. The protein is Elongation factor 1-alpha (TEF1) of Aureobasidium pullulans (Black yeast).